We begin with the raw amino-acid sequence, 118 residues long: NADH-ubiquinone oxidoreductase chain 3 (118 aa).

Helical transmembrane passes span 7–27 (IFIYLVMSLLVSLILLGLPFL), 62–82 (LVSILFIIFDLEVTFFFPWAV), and 87–107 (IDLFGFWSMMAFLLILTIGFL).

It belongs to the complex I subunit 3 family.

The protein localises to the mitochondrion membrane. It carries out the reaction a ubiquinone + NADH + 5 H(+)(in) = a ubiquinol + NAD(+) + 4 H(+)(out). Core subunit of the mitochondrial membrane respiratory chain NADH dehydrogenase (Complex I) that is believed to belong to the minimal assembly required for catalysis. Complex I functions in the transfer of electrons from NADH to the respiratory chain. The immediate electron acceptor for the enzyme is believed to be ubiquinone. In Allium cepa (Onion), this protein is NADH-ubiquinone oxidoreductase chain 3 (ND3).